Consider the following 84-residue polypeptide: uncharacterized protein (84 aa).

Residues 1-14 show a composition bias toward low complexity; that stretch reads MQKLNKSSSKGKNN. Residues 1–84 are disordered; that stretch reads MQKLNKSSSK…VDKGERKESE (84 aa). The segment covering 28–40 has biased composition (gly residues); sequence STYGFGPYGGGGF. 2 stretches are compositionally biased toward basic and acidic residues: residues 53-65 and 73-84; these read DTKK…EEGT and KLVDKGERKESE.

This is an uncharacterized protein from Schizosaccharomyces pombe (strain 972 / ATCC 24843) (Fission yeast).